Reading from the N-terminus, the 359-residue chain is uncharacterized protein (359 aa).

It belongs to the glycosyltransferase group 1 family. Glycosyltransferase 4 subfamily.

This is an uncharacterized protein from Bacillus subtilis (strain 168).